We begin with the raw amino-acid sequence, 291 residues long: Glycine--tRNA ligase alpha subunit (291 aa).

The protein belongs to the class-II aminoacyl-tRNA synthetase family. As to quaternary structure, tetramer of two alpha and two beta subunits.

The protein resides in the cytoplasm. It carries out the reaction tRNA(Gly) + glycine + ATP = glycyl-tRNA(Gly) + AMP + diphosphate. This Geotalea uraniireducens (strain Rf4) (Geobacter uraniireducens) protein is Glycine--tRNA ligase alpha subunit.